Here is a 527-residue protein sequence, read N- to C-terminus: EGF domain-specific O-linked N-acetylglucosamine transferase (527 aa).

Residues 1-17 form the signal peptide; that stretch reads MLKLLVLGVLLHDVSLS. The Required for optimal activity motif lies at 295–297; the sequence is DYD. A glycan (N-linked (GlcNAc...) asparagine) is linked at Asn-354. Residues 524 to 527 carry the Prevents secretion from ER motif; sequence RDEL.

The protein belongs to the glycosyltransferase 61 family.

It is found in the endoplasmic reticulum lumen. It carries out the reaction L-seryl-[protein] + UDP-N-acetyl-alpha-D-glucosamine = 3-O-(N-acetyl-beta-D-glucosaminyl)-L-seryl-[protein] + UDP + H(+). It catalyses the reaction L-threonyl-[protein] + UDP-N-acetyl-alpha-D-glucosamine = 3-O-(N-acetyl-beta-D-glucosaminyl)-L-threonyl-[protein] + UDP + H(+). Catalyzes the transfer of a single N-acetylglucosamine from UDP-GlcNAc to a serine or threonine residue in extracellular proteins resulting in their modification with a beta-linked N-acetylglucosamine (O-GlcNAc). Specifically glycosylates the Thr residue located between the fifth and sixth conserved cysteines of folded EGF-like domains. The sequence is that of EGF domain-specific O-linked N-acetylglucosamine transferase (EOGT) from Canis lupus familiaris (Dog).